Consider the following 315-residue polypeptide: Ribosomal protein L11 methyltransferase (315 aa).

4 residues coordinate S-adenosyl-L-methionine: T164, G185, D207, and N249.

It belongs to the methyltransferase superfamily. PrmA family.

It is found in the cytoplasm. It carries out the reaction L-lysyl-[protein] + 3 S-adenosyl-L-methionine = N(6),N(6),N(6)-trimethyl-L-lysyl-[protein] + 3 S-adenosyl-L-homocysteine + 3 H(+). Its function is as follows. Methylates ribosomal protein L11. The protein is Ribosomal protein L11 methyltransferase of Lactobacillus johnsonii (strain CNCM I-12250 / La1 / NCC 533).